A 397-amino-acid chain; its full sequence is Subtilisin-like protease 12 (397 aa).

Positions 1–19 (MSIFKLMVIYFTLFWVVNA) are cleaved as a signal peptide. Residues 20-116 (AQLLDLDSHG…VEPNREMKAA (97 aa)) constitute a propeptide that is removed on maturation. One can recognise an Inhibitor I9 domain in the interval 35-115 (YIVVMKNGVS…FVEPNREMKA (81 aa)). N123, N136, and N150 each carry an N-linked (GlcNAc...) asparagine glycan. Residues 125 to 397 (TWGLARISHM…DKLLYNGSGA (273 aa)) form the Peptidase S8 domain. Active-site charge relay system residues include D157 and H188. N249, N305, and N334 each carry an N-linked (GlcNAc...) asparagine glycan. S343 serves as the catalytic Charge relay system. 2 N-linked (GlcNAc...) asparagine glycosylation sites follow: N385 and N393.

This sequence belongs to the peptidase S8 family.

The protein resides in the secreted. In terms of biological role, secreted subtilisin-like serine protease with keratinolytic activity that contributes to pathogenicity. The protein is Subtilisin-like protease 12 (SUB12) of Arthroderma gypseum (strain ATCC MYA-4604 / CBS 118893) (Microsporum gypseum).